The chain runs to 341 residues: Phosphoribosylformylglycinamidine cyclo-ligase (341 aa).

It belongs to the AIR synthase family.

The protein localises to the cytoplasm. It catalyses the reaction 2-formamido-N(1)-(5-O-phospho-beta-D-ribosyl)acetamidine + ATP = 5-amino-1-(5-phospho-beta-D-ribosyl)imidazole + ADP + phosphate + H(+). Its pathway is purine metabolism; IMP biosynthesis via de novo pathway; 5-amino-1-(5-phospho-D-ribosyl)imidazole from N(2)-formyl-N(1)-(5-phospho-D-ribosyl)glycinamide: step 2/2. The protein is Phosphoribosylformylglycinamidine cyclo-ligase of Xanthomonas oryzae pv. oryzae (strain MAFF 311018).